A 453-amino-acid chain; its full sequence is MARKAVSRKRKASASPGAGSDAQGPQFGWDHSLHKRKRLPPVKRSLVYYLKNREVRLQNETSYSRLLHGYAAQQLPSLLKEREFHLGTLNKVFASQWLNHRQVVCGTKCNTLFVVDVQTGQITKIPILKDREPGGVTQQGCGIHAIELNPSRTLLATGGDNPNSLAIYRLPTLDPVCVGDDGHKDWIFSIAWINDTMAVSGSRDGSMGLWEVTDDVLTKSDARHNVSPVPVYAHITHKALKDIPKEDTNPDNCKVRALAFNNKNKELGAVSLDGYFHLWKAENTLSKLLSTKLPYCRENVCLAYGSEWSVYAVGSQAHVSFLDPRQPSYNVKSVCSRERGSGIRSVSFYEHIITVGTGQGSLLFYDIRAQRFLEERLSACYGSKPRLAGENLKLTTGRGWLNHDETWRNYFSDIDFFPNAVYTHCYDSSGTKLFVAGGPLPSGLHGNYAGLWS.

Residues 1–12 (MARKAVSRKRKA) show a composition bias toward basic residues. The interval 1-34 (MARKAVSRKRKASASPGAGSDAQGPQFGWDHSLH) is disordered. The tract at residues 1–38 (MARKAVSRKRKASASPGAGSDAQGPQFGWDHSLHKRKR) is required for nuclear location and interaction with MOV10. A Phosphoserine modification is found at S15. WD repeat units lie at residues 138 to 178 (QQGC…PVCV), 182 to 220 (GHKD…LTKS), 250 to 289 (PDNC…SKLL), and 338 to 375 (ERGS…FLEE).

Belongs to the WD repeat DCAF12 family. In terms of assembly, component of the DCX(DCAF12) E3 ubiquitin ligase complex, at least composed of CUL4 (CUL4A or CUL4B), DDB1, DCAF12 and RBX1.

It localises to the cytoplasm. The protein localises to the cytoskeleton. Its subcellular location is the microtubule organizing center. It is found in the centrosome. The protein resides in the nucleus. It functions in the pathway protein modification; protein ubiquitination. Functionally, substrate-recognition component of a DCX (DDB1-CUL4-X-box) E3 ubiquitin-protein ligase complex of the DesCEND (destruction via C-end degrons) pathway, which recognizes a C-degron located at the extreme C terminus of target proteins, leading to their ubiquitination and degradation. The C-degron recognized by the DesCEND pathway is usually a motif of less than ten residues and can be present in full-length proteins, truncated proteins or proteolytically cleaved forms. The DCX(DCAF12) complex specifically recognizes proteins with a diglutamate (Glu-Glu) at the C-terminus, such as MAGEA3, MAGEA6 and CCT5, leading to their ubiquitination and degradation. Ubiquitination of MAGEA3, MAGEA6 by DCX(DCAF12) complex is required for starvation-induced autophagy. Also directly recognizes the C-terminal glutamate-leucine (Glu-Leu) degron as an alternative degron in proteins such as MOV10, leading to their ubiquitination and degradation. Controls the protein level of MOV10 during spermatogenesis and in T cells, especially after their activation. The chain is DDB1- and CUL4-associated factor 12 from Mus musculus (Mouse).